Consider the following 340-residue polypeptide: Integral membrane protein SED5 (340 aa).

The Cytoplasmic portion of the chain corresponds to 1-319; sequence MNIKDRTSEF…KYFDRIKSNR (319 aa). The interval 31–51 is disordered; the sequence is RLQEKESENFANNTTGNGKSV. Polar residues predominate over residues 39 to 51; that stretch reads NFANNTTGNGKSV. Residues 146–173 are a coiled coil; sequence LNTQMKNISGSFKDVLEERQRLEMANKD. Residues 180 to 231 are disordered; it reads TDTGHAPADDQTQSNHAADLTTYNNSNPFMTSLLDESSEKNNNSSNQGELSF. Residues 189 to 209 are compositionally biased toward polar residues; the sequence is DQTQSNHAADLTTYNNSNPFM. In terms of domain architecture, t-SNARE coiled-coil homology spans 249-311; it reads NVYLQERNRA…SGAQRELLKY (63 aa). Residues 320–340 traverse the membrane as a helical; Anchor for type IV membrane protein segment; sequence WLAAKVFFIIFVFFVIWVLVN.

It belongs to the syntaxin family. As to quaternary structure, interacts with SLY1, STF1, SFB3 and GOS1.

It is found in the membrane. It localises to the golgi apparatus membrane. Its function is as follows. Required for vesicular transport between the endoplasmic reticulum and the Golgi complex. Acts as a target organelle soluble NSF attachment protein receptor (t-SNARE). The sequence is that of Integral membrane protein SED5 (SED5) from Saccharomyces cerevisiae (strain ATCC 204508 / S288c) (Baker's yeast).